The primary structure comprises 230 residues: Large ribosomal subunit protein uL1 (230 aa).

This sequence belongs to the universal ribosomal protein uL1 family. In terms of assembly, part of the 50S ribosomal subunit.

In terms of biological role, binds directly to 23S rRNA. The L1 stalk is quite mobile in the ribosome, and is involved in E site tRNA release. Functionally, protein L1 is also a translational repressor protein, it controls the translation of the L11 operon by binding to its mRNA. The protein is Large ribosomal subunit protein uL1 of Leptospira interrogans serogroup Icterohaemorrhagiae serovar copenhageni (strain Fiocruz L1-130).